The sequence spans 97 residues: Large ribosomal subunit protein uL23 (97 aa).

The protein belongs to the universal ribosomal protein uL23 family. In terms of assembly, part of the 50S ribosomal subunit. Contacts protein L29, and trigger factor when it is bound to the ribosome.

Functionally, one of the early assembly proteins it binds 23S rRNA. One of the proteins that surrounds the polypeptide exit tunnel on the outside of the ribosome. Forms the main docking site for trigger factor binding to the ribosome. The sequence is that of Large ribosomal subunit protein uL23 from Clostridium botulinum (strain ATCC 19397 / Type A).